The primary structure comprises 479 residues: Trigger factor (479 aa).

The PPIase FKBP-type domain occupies 174–261 (GDIAVVSFSG…LKELKTRELP (88 aa)). Residues 437–479 (KVLESEAKTSKPAAKSKGSKTKSTKTKTNKAKTEKPASDKTKS) form a disordered region. Positions 453-466 (KGSKTKSTKTKTNK) are enriched in basic residues. The span at 467-479 (AKTEKPASDKTKS) shows a compositional bias: basic and acidic residues.

The protein belongs to the FKBP-type PPIase family. Tig subfamily.

Its subcellular location is the cytoplasm. It catalyses the reaction [protein]-peptidylproline (omega=180) = [protein]-peptidylproline (omega=0). Functionally, involved in protein export. Acts as a chaperone by maintaining the newly synthesized protein in an open conformation. Functions as a peptidyl-prolyl cis-trans isomerase. The protein is Trigger factor of Prochlorococcus marinus (strain MIT 9303).